Reading from the N-terminus, the 426-residue chain is Putative competence-damage inducible protein (426 aa).

The protein belongs to the CinA family.

The polypeptide is Putative competence-damage inducible protein (Symbiobacterium thermophilum (strain DSM 24528 / JCM 14929 / IAM 14863 / T)).